Consider the following 341-residue polypeptide: Alanine racemase (341 aa).

The active-site Proton acceptor; specific for D-alanine is K33. K33 carries the post-translational modification N6-(pyridoxal phosphate)lysine. R126 is a substrate binding site. The active-site Proton acceptor; specific for L-alanine is the Y236. M284 provides a ligand contact to substrate.

This sequence belongs to the alanine racemase family. The cofactor is pyridoxal 5'-phosphate.

The catalysed reaction is L-alanine = D-alanine. It participates in amino-acid biosynthesis; D-alanine biosynthesis; D-alanine from L-alanine: step 1/1. Catalyzes the interconversion of L-alanine and D-alanine. The sequence is that of Alanine racemase (alr) from Aquifex pyrophilus.